We begin with the raw amino-acid sequence, 107 residues long: Putative regulatory protein BCG9842_A0044 (107 aa).

It belongs to the RemA family.

The chain is Putative regulatory protein BCG9842_A0044 from Bacillus cereus (strain G9842).